The chain runs to 299 residues: MNQVEMTEFPVGKPQEALYGVASTPDGALWFTLAKGNAIGRLSPDGAVSRFPLPHADGQPTTITCGPDGRPWFTLSSANAIGRLAPDGALRMFELPRPASRPFGIAGGHDGCLWFAEMAGDRIGRITIDGDIEEYDLPVKGGYPSCMAAGRDGLMWFTLNQAGAVGSISATAAPRIFPLGAADAAPVGIASDAQGALWIAQAGNGAIARFDAGGRITEFPLHSRAARPHAIAADAAGNLWFTEWGANRIGRISEAGDLAGYELAAPGSEPHGIAIDPHGCVWAALETGRLVRLQASPRD.

H229 provides a ligand contact to substrate. A Mg(2+)-binding site is contributed by E269. Catalysis depends on H271, which acts as the Proton acceptor. E286 is a binding site for Mg(2+).

The protein belongs to the Vgb family. Monomer. It depends on Mg(2+) as a cofactor.

Inactivates the type B streptogramin antibiotics by linearizing the lactone ring at the ester linkage, generating a free phenylglycine carboxylate and converting the threonyl moiety into 2-amino-butenoic acid. This chain is Virginiamycin B lyase, found in Bordetella bronchiseptica (strain ATCC BAA-588 / NCTC 13252 / RB50) (Alcaligenes bronchisepticus).